The following is a 265-amino-acid chain: Thiazole synthase (265 aa).

Catalysis depends on K103, which acts as the Schiff-base intermediate with DXP. 1-deoxy-D-xylulose 5-phosphate-binding positions include G164, 190 to 191 (AG), and 212 to 213 (NT).

This sequence belongs to the ThiG family. Homotetramer. Forms heterodimers with either ThiH or ThiS.

Its subcellular location is the cytoplasm. The enzyme catalyses [ThiS sulfur-carrier protein]-C-terminal-Gly-aminoethanethioate + 2-iminoacetate + 1-deoxy-D-xylulose 5-phosphate = [ThiS sulfur-carrier protein]-C-terminal Gly-Gly + 2-[(2R,5Z)-2-carboxy-4-methylthiazol-5(2H)-ylidene]ethyl phosphate + 2 H2O + H(+). It functions in the pathway cofactor biosynthesis; thiamine diphosphate biosynthesis. In terms of biological role, catalyzes the rearrangement of 1-deoxy-D-xylulose 5-phosphate (DXP) to produce the thiazole phosphate moiety of thiamine. Sulfur is provided by the thiocarboxylate moiety of the carrier protein ThiS. In vitro, sulfur can be provided by H(2)S. This chain is Thiazole synthase, found in Bordetella bronchiseptica (strain ATCC BAA-588 / NCTC 13252 / RB50) (Alcaligenes bronchisepticus).